Consider the following 157-residue polypeptide: Protein SINE4 (157 aa).

In terms of domain architecture, KASH spans Val-104 to Thr-157. A helical membrane pass occupies residues Phe-122–Phe-142. The Required for nuclear localization signature appears at Leu-154 to Thr-157.

Interacts with SUN1 and SUN2.

The protein localises to the nucleus membrane. The polypeptide is Protein SINE4 (Arabidopsis thaliana (Mouse-ear cress)).